The following is a 96-amino-acid chain: Large ribosomal subunit protein bL28 (96 aa).

The tract at residues 1 to 23 (MSRVCELSGKAPMTGNTVSHANN) is disordered.

The protein belongs to the bacterial ribosomal protein bL28 family.

This Cereibacter sphaeroides (strain ATCC 17025 / ATH 2.4.3) (Rhodobacter sphaeroides) protein is Large ribosomal subunit protein bL28.